A 432-amino-acid polypeptide reads, in one-letter code: Short transient receptor potential channel 2 homolog (432 aa).

4 helical membrane passes run 1–21 (MVIL…AGLA), 52–72 (FLAE…LASI), 96–116 (FMFI…NIYV), and 162–182 (LYGI…IAMI). Residues 356–432 (QNLGPPIPET…EADLGAKEGT (77 aa)) form a disordered region. The segment covering 387–404 (AGGAQAPASGESGPSSPA) has biased composition (low complexity).

Belongs to the transient receptor (TC 1.A.4) family. STrpC subfamily. TRPC2 sub-subfamily.

The protein resides in the membrane. Thought to form a receptor-activated calcium permeant cation channel. The sequence is that of Short transient receptor potential channel 2 homolog (TRPC2) from Bos taurus (Bovine).